Here is a 354-residue protein sequence, read N- to C-terminus: S-adenosylmethionine:tRNA ribosyltransferase-isomerase (354 aa).

Belongs to the QueA family. Monomer.

Its subcellular location is the cytoplasm. It carries out the reaction 7-aminomethyl-7-carbaguanosine(34) in tRNA + S-adenosyl-L-methionine = epoxyqueuosine(34) in tRNA + adenine + L-methionine + 2 H(+). It participates in tRNA modification; tRNA-queuosine biosynthesis. In terms of biological role, transfers and isomerizes the ribose moiety from AdoMet to the 7-aminomethyl group of 7-deazaguanine (preQ1-tRNA) to give epoxyqueuosine (oQ-tRNA). The polypeptide is S-adenosylmethionine:tRNA ribosyltransferase-isomerase (Klebsiella pneumoniae (strain 342)).